A 92-amino-acid polypeptide reads, in one-letter code: DNA-directed RNA polymerase subunit omega (92 aa).

It belongs to the RNA polymerase subunit omega family. The RNAP catalytic core consists of 2 alpha, 1 beta, 1 beta' and 1 omega subunit. When a sigma factor is associated with the core the holoenzyme is formed, which can initiate transcription.

The catalysed reaction is RNA(n) + a ribonucleoside 5'-triphosphate = RNA(n+1) + diphosphate. Promotes RNA polymerase assembly. Latches the N- and C-terminal regions of the beta' subunit thereby facilitating its interaction with the beta and alpha subunits. The sequence is that of DNA-directed RNA polymerase subunit omega from Shewanella amazonensis (strain ATCC BAA-1098 / SB2B).